The primary structure comprises 199 residues: MPEQSNDYRVAVFGAGGVGKSSLVLRFVKGTFRESYIPTVEDTYRRVISCDKSICTLQITDTTGSHQFPAMQRLSISKGHAFILVYSITSRQSLEELKPIYEQICEIKGDVESIPIMLVGNKCDESPSREVQSSEAEALARTWKCAFMETSAKLNHNVKELFQELLNLEKRRTVSLQIDGKKSKQQKRKEKLKGKCVIM.

GTP is bound by residues 14–21, 33–39, 61–65, and 121–124; these read GAGGVGKS, RESYIPT, DTTGS, and NKCD. S35 is modified (phosphoserine). Residues 36-44 carry the Effector region motif; that stretch reads YIPTVEDTY. Position 126 is a phosphoserine (S126). 152–153 serves as a coordination point for GTP; that stretch reads AK. C196 is modified (cysteine methyl ester). The S-geranylgeranyl cysteine moiety is linked to residue C196. The propeptide at 197–199 is removed in mature form; the sequence is VIM.

It belongs to the small GTPase superfamily. Di-Ras family. Ubiquitinated by the ECS(ASB11) complex via 'Lys-11'-linked ubiquitin chains, leading to its degradation by the proteasome.

It localises to the cell membrane. It catalyses the reaction GTP + H2O = GDP + phosphate + H(+). In terms of biological role, displays low GTPase activity and exists predominantly in the GTP-bound form. The protein is GTP-binding protein Di-Ras2 (DIRAS2) of Pongo abelii (Sumatran orangutan).